A 300-amino-acid chain; its full sequence is Cholesterol 25-hydroxylase-like protein (300 aa).

A glycan (N-linked (GlcNAc...) asparagine) is linked at Asn9. The next 3 membrane-spanning stretches (helical) occupy residues 43–63 (LFPP…FTFI), 95–115 (LQGW…LIWV), and 130–152 (MVSQ…HYFN). The 132-residue stretch at 135 to 266 (AIFFLAFDFT…WFNYLDRLMG (132 aa)) folds into the Fatty acid hydroxylase domain. A Histidine box-1 motif is present at residues 148–152 (FHYFN). The Histidine box-2 signature appears at 163–167 (HSVHH). A helical membrane pass occupies residues 180 to 200 (LHPFELFFVATFITTVPWIFP). The Histidine box-3 motif lies at 242–248 (AHDMHHL).

Belongs to the sterol desaturase family. Fe cation serves as cofactor.

It is found in the membrane. Functionally, probable sterol desaturase. This is Cholesterol 25-hydroxylase-like protein from Caenorhabditis briggsae.